Here is a 45-residue protein sequence, read N- to C-terminus: C-phycocyanin beta subunit (45 aa).

The protein belongs to the phycobiliprotein family. In terms of assembly, heterodimer of an alpha and a beta subunit. The hererodimer further assembles into trimers and the trimers into hexamers. Post-translationally, contains two covalently linked bilin chromophores.

It localises to the cellular thylakoid membrane. Light-harvesting photosynthetic bile pigment-protein from the phycobiliprotein complex (phycobilisome, PBS). Phycocyanin is the major phycobiliprotein in the PBS rod. The chain is C-phycocyanin beta subunit (cpcB) from Limnospira fusiformis (Arthrospira fusiformis).